We begin with the raw amino-acid sequence, 689 residues long: Glycine--tRNA ligase beta subunit (689 aa).

This sequence belongs to the class-II aminoacyl-tRNA synthetase family. In terms of assembly, tetramer of two alpha and two beta subunits.

It is found in the cytoplasm. The enzyme catalyses tRNA(Gly) + glycine + ATP = glycyl-tRNA(Gly) + AMP + diphosphate. The protein is Glycine--tRNA ligase beta subunit of Serratia proteamaculans (strain 568).